The primary structure comprises 77 residues: Large ribosomal subunit protein bL28 (77 aa).

This sequence belongs to the bacterial ribosomal protein bL28 family.

The sequence is that of Large ribosomal subunit protein bL28 from Ralstonia nicotianae (strain ATCC BAA-1114 / GMI1000) (Ralstonia solanacearum).